The chain runs to 191 residues: Protein YceI (191 aa).

Positions 1 to 22 (MKKSLLGLTFASLMFSAGSAVA) are cleaved as a signal peptide.

The protein belongs to the UPF0312 family. Type 1 subfamily.

It is found in the periplasm. The sequence is that of Protein YceI from Escherichia coli O17:K52:H18 (strain UMN026 / ExPEC).